The sequence spans 115 residues: NADH-ubiquinone oxidoreductase chain 3 (115 aa).

3 consecutive transmembrane segments (helical) span residues 4–24 (LMAL…AFWL), 55–75 (FFLV…LLPL), and 84–104 (INIM…GLAY).

Belongs to the complex I subunit 3 family. In terms of assembly, core subunit of respiratory chain NADH dehydrogenase (Complex I) which is composed of 45 different subunits. Interacts with TMEM186. Interacts with TMEM242.

It localises to the mitochondrion inner membrane. It catalyses the reaction a ubiquinone + NADH + 5 H(+)(in) = a ubiquinol + NAD(+) + 4 H(+)(out). In terms of biological role, core subunit of the mitochondrial membrane respiratory chain NADH dehydrogenase (Complex I) which catalyzes electron transfer from NADH through the respiratory chain, using ubiquinone as an electron acceptor. Essential for the catalytic activity of complex I. In Peromyscus melanotis (Black-eared mouse), this protein is NADH-ubiquinone oxidoreductase chain 3.